Here is an 86-residue protein sequence, read N- to C-terminus: Small ribosomal subunit protein uS15c (86 aa).

Belongs to the universal ribosomal protein uS15 family. In terms of assembly, part of the 30S ribosomal subunit.

It localises to the plastid. The sequence is that of Small ribosomal subunit protein uS15c (rps15) from Cuscuta obtusiflora (Peruvian dodder).